Here is a 323-residue protein sequence, read N- to C-terminus: GTP 3',8-cyclase (323 aa).

Residues 4 to 226 form the Radical SAM core domain; the sequence is TFQRQINYLR…LEPFPDLATN (223 aa). Residue arginine 13 coordinates GTP. [4Fe-4S] cluster contacts are provided by cysteine 20 and cysteine 24. Residue tyrosine 26 coordinates S-adenosyl-L-methionine. Cysteine 27 serves as a coordination point for [4Fe-4S] cluster. Arginine 63 lines the GTP pocket. Glycine 67 lines the S-adenosyl-L-methionine pocket. Threonine 94 contacts GTP. Serine 118 is an S-adenosyl-L-methionine binding site. A GTP-binding site is contributed by lysine 155. Methionine 189 lines the S-adenosyl-L-methionine pocket. Positions 252 and 255 each coordinate [4Fe-4S] cluster. Residue 257–259 participates in GTP binding; the sequence is RLR. Cysteine 269 lines the [4Fe-4S] cluster pocket.

This sequence belongs to the radical SAM superfamily. MoaA family. As to quaternary structure, monomer and homodimer. [4Fe-4S] cluster is required as a cofactor.

The catalysed reaction is GTP + AH2 + S-adenosyl-L-methionine = (8S)-3',8-cyclo-7,8-dihydroguanosine 5'-triphosphate + 5'-deoxyadenosine + L-methionine + A + H(+). It functions in the pathway cofactor biosynthesis; molybdopterin biosynthesis. Catalyzes the cyclization of GTP to (8S)-3',8-cyclo-7,8-dihydroguanosine 5'-triphosphate. The sequence is that of GTP 3',8-cyclase from Moorella thermoacetica (strain ATCC 39073 / JCM 9320).